The following is a 174-amino-acid chain: uncharacterized protein (174 aa).

Residues 137–174 (TNVTLGDDTPKSYDAPVSAIPPPATATTANATGVKPLE) form a disordered region.

This is an uncharacterized protein from Acanthamoeba polyphaga (Amoeba).